The following is a 1073-amino-acid chain: Carbamoyl phosphate synthase large chain (1073 aa).

The segment at 2–403 (PKRTDIKSIL…SVQKALRGLE (402 aa)) is carboxyphosphate synthetic domain. ATP-binding residues include R129, R169, G175, G176, E208, L210, E215, G241, V242, H243, Q285, and E299. The ATP-grasp 1 domain occupies 133 to 328 (DKAMKDIGLA…IAKIAAKLAV (196 aa)). Mg(2+) contacts are provided by Q285, E299, and N301. Residues Q285, E299, and N301 each coordinate Mn(2+). An oligomerization domain region spans residues 404–553 (VGATGFDPKL…YSTYEEECEA (150 aa)). Residues 554–935 (NPSSREKIMI…AFAKAQLGAS (382 aa)) form a carbamoyl phosphate synthetic domain region. Residues 678–869 (QQMVQRLNLR…LAKVAARVMA (192 aa)) form the ATP-grasp 2 domain. Positions 714, 753, 755, 760, 785, 786, 787, 788, 828, and 840 each coordinate ATP. Residues Q828, E840, and N842 each contribute to the Mg(2+) site. 3 residues coordinate Mn(2+): Q828, E840, and N842. The 138-residue stretch at 936–1073 (EILPTAGCAF…LQDLHAGIKA (138 aa)) folds into the MGS-like domain. The allosteric domain stretch occupies residues 936–1073 (EILPTAGCAF…LQDLHAGIKA (138 aa)).

It belongs to the CarB family. In terms of assembly, composed of two chains; the small (or glutamine) chain promotes the hydrolysis of glutamine to ammonia, which is used by the large (or ammonia) chain to synthesize carbamoyl phosphate. Tetramer of heterodimers (alpha,beta)4. It depends on Mg(2+) as a cofactor. The cofactor is Mn(2+).

The catalysed reaction is hydrogencarbonate + L-glutamine + 2 ATP + H2O = carbamoyl phosphate + L-glutamate + 2 ADP + phosphate + 2 H(+). It catalyses the reaction hydrogencarbonate + NH4(+) + 2 ATP = carbamoyl phosphate + 2 ADP + phosphate + 2 H(+). It functions in the pathway amino-acid biosynthesis; L-arginine biosynthesis; carbamoyl phosphate from bicarbonate: step 1/1. The protein operates within pyrimidine metabolism; UMP biosynthesis via de novo pathway; (S)-dihydroorotate from bicarbonate: step 1/3. Functionally, large subunit of the glutamine-dependent carbamoyl phosphate synthetase (CPSase). CPSase catalyzes the formation of carbamoyl phosphate from the ammonia moiety of glutamine, carbonate, and phosphate donated by ATP, constituting the first step of 2 biosynthetic pathways, one leading to arginine and/or urea and the other to pyrimidine nucleotides. The large subunit (synthetase) binds the substrates ammonia (free or transferred from glutamine from the small subunit), hydrogencarbonate and ATP and carries out an ATP-coupled ligase reaction, activating hydrogencarbonate by forming carboxy phosphate which reacts with ammonia to form carbamoyl phosphate. In Pseudomonas aeruginosa (strain ATCC 15692 / DSM 22644 / CIP 104116 / JCM 14847 / LMG 12228 / 1C / PRS 101 / PAO1), this protein is Carbamoyl phosphate synthase large chain.